Here is a 329-residue protein sequence, read N- to C-terminus: GMP reductase (329 aa).

Cys178 functions as the Thioimidate intermediate in the catalytic mechanism. 207–230 (VIADGGIRTHGDIAKSIRMGATMV) contributes to the NADP(+) binding site.

This sequence belongs to the IMPDH/GMPR family. GuaC type 2 subfamily.

The catalysed reaction is IMP + NH4(+) + NADP(+) = GMP + NADPH + 2 H(+). In terms of biological role, catalyzes the irreversible NADPH-dependent deamination of GMP to IMP. It functions in the conversion of nucleobase, nucleoside and nucleotide derivatives of G to A nucleotides, and in maintaining the intracellular balance of A and G nucleotides. This Lactococcus lactis subsp. lactis (strain IL1403) (Streptococcus lactis) protein is GMP reductase.